The following is a 60-amino-acid chain: Potassium channel toxin alpha-KTx 15.8 (60 aa).

The signal sequence occupies residues 1 to 22 (MKFSSIILLTLLICSMSIFGNC). Gln-23 is modified (pyrrolidone carboxylic acid). 3 cysteine pairs are disulfide-bonded: Cys-30-Cys-50, Cys-35-Cys-55, and Cys-39-Cys-57.

The protein belongs to the short scorpion toxin superfamily. Potassium channel inhibitor family. Alpha-KTx 15 subfamily. As to expression, expressed by the venom gland.

The protein resides in the secreted. Blocker of A-type voltage-gated potassium channels of cerebellar granular cells. May also inhibit Kv4/KCND when coexpressed with DPP6 or DPP10. The occlusion of the outer entry of the K(+) conducting pore is partially reversible and affects both open and closed channels. It shares the same target in rat brain than BmTX3 (AC Q8I0L5) and AmmTX3 (AC P60208). Also shows a weak inhibition on Kv1.2/KCNA2 and Kv1.3/KCNA3 voltage-gated potassium channels. The protein is Potassium channel toxin alpha-KTx 15.8 of Olivierus martensii (Manchurian scorpion).